A 437-amino-acid polypeptide reads, in one-letter code: MKNIKFSLAWQILFAMVLGILLGSYLHYHSDSRDWLVVNLLSPAGDIFIHLIKMIVVPIVISTLVVGIAGVGDAKQLGRIGAKTIIYFEVITTVAIILGITLANVFQPGAGVDMSQLATVDISKYQSTTEAVQSSSHGIMGTILSLVPTNIVASMAKGEMLPIIFFSVLFGLGLSSLPATHREPLVTVFRSISETMFKVTHMVMRYAPVGVFALIAVTVANFGFSSLWPLAKLVLLVHFAILFFALVVLGIVARLCGLSVWILIRILKDELILAYSTASSESVLPRIIEKMEAYGAPVSITSFVVPTGYSFNLDGSTLYQSIAAIFIAQLYGIDLSIWQEIILVLTLMVTSKGIAGVPGVSFVVLLATLGSVGIPLEGLAFIAGVDRILDMARTALNVVGNALAVLVIAKWEHKFDRKKALAYEREVLGKFDKTADQ.

Residues 1 to 5 are Cytoplasmic-facing; that stretch reads MKNIK. Residues 6–26 traverse the membrane as a helical segment; sequence FSLAWQILFAMVLGILLGSYL. Topologically, residues 27–50 are periplasmic; it reads HYHSDSRDWLVVNLLSPAGDIFIH. A helical transmembrane segment spans residues 51 to 71; the sequence is LIKMIVVPIVISTLVVGIAGV. The Cytoplasmic segment spans residues 72–84; that stretch reads GDAKQLGRIGAKT. Residues 85–105 traverse the membrane as a helical segment; that stretch reads IIYFEVITTVAIILGITLANV. The Periplasmic portion of the chain corresponds to 106-159; the sequence is FQPGAGVDMSQLATVDISKYQSTTEAVQSSSHGIMGTILSLVPTNIVASMAKGE. Residues 160 to 180 form a helical membrane-spanning segment; the sequence is MLPIIFFSVLFGLGLSSLPAT. The Cytoplasmic portion of the chain corresponds to 181–210; that stretch reads HREPLVTVFRSISETMFKVTHMVMRYAPVG. A helical membrane pass occupies residues 211–231; the sequence is VFALIAVTVANFGFSSLWPLA. Residue lysine 232 is a topological domain, periplasmic. Residues 233–253 form a helical membrane-spanning segment; it reads LVLLVHFAILFFALVVLGIVA. Residues 254–292 lie on the Cytoplasmic side of the membrane; it reads RLCGLSVWILIRILKDELILAYSTASSESVLPRIIEKME. Residues 293–313 traverse the membrane as a helical segment; sequence AYGAPVSITSFVVPTGYSFNL. Residues 314–324 are Periplasmic-facing; sequence DGSTLYQSIAA. A helical membrane pass occupies residues 325–345; it reads IFIAQLYGIDLSIWQEIILVL. The Cytoplasmic segment spans residues 346–361; sequence TLMVTSKGIAGVPGVS. A helical transmembrane segment spans residues 362 to 382; the sequence is FVVLLATLGSVGIPLEGLAFI. Topologically, residues 383-387 are periplasmic; the sequence is AGVDR. A helical membrane pass occupies residues 388–408; that stretch reads ILDMARTALNVVGNALAVLVI. The Cytoplasmic portion of the chain corresponds to 409 to 437; it reads AKWEHKFDRKKALAYEREVLGKFDKTADQ.

Belongs to the dicarboxylate/amino acid:cation symporter (DAACS) (TC 2.A.23) family. GltP subfamily.

It localises to the cell inner membrane. Its activity is regulated as follows. Glutamate uptake is inhibited by L-cysteate and beta-hydroxyaspartate. Inhibited by the uncoupler carbonylcyanide m-chlorophenylhydrazone (CCCP). In terms of biological role, catalyzes the proton-dependent, binding-protein-independent transport of glutamate and aspartate. This Escherichia coli (strain K12) protein is Proton/glutamate-aspartate symporter.